The following is a 317-amino-acid chain: Transaldolase (317 aa).

Lysine 126 functions as the Schiff-base intermediate with substrate in the catalytic mechanism.

It belongs to the transaldolase family. Type 1 subfamily. As to quaternary structure, homodimer.

The protein localises to the cytoplasm. It catalyses the reaction D-sedoheptulose 7-phosphate + D-glyceraldehyde 3-phosphate = D-erythrose 4-phosphate + beta-D-fructose 6-phosphate. The protein operates within carbohydrate degradation; pentose phosphate pathway; D-glyceraldehyde 3-phosphate and beta-D-fructose 6-phosphate from D-ribose 5-phosphate and D-xylulose 5-phosphate (non-oxidative stage): step 2/3. Transaldolase is important for the balance of metabolites in the pentose-phosphate pathway. In Burkholderia multivorans (strain ATCC 17616 / 249), this protein is Transaldolase.